The following is a 248-amino-acid chain: Probable transcriptional regulatory protein Oant_1200 (248 aa).

Belongs to the TACO1 family.

The protein localises to the cytoplasm. The chain is Probable transcriptional regulatory protein Oant_1200 from Brucella anthropi (strain ATCC 49188 / DSM 6882 / CCUG 24695 / JCM 21032 / LMG 3331 / NBRC 15819 / NCTC 12168 / Alc 37) (Ochrobactrum anthropi).